The primary structure comprises 205 residues: Urease accessory protein UreG (205 aa).

11–18 (GPVGSGKT) contacts GTP.

The protein belongs to the SIMIBI class G3E GTPase family. UreG subfamily. In terms of assembly, homodimer. UreD, UreF and UreG form a complex that acts as a GTP-hydrolysis-dependent molecular chaperone, activating the urease apoprotein by helping to assemble the nickel containing metallocenter of UreC. The UreE protein probably delivers the nickel.

Its subcellular location is the cytoplasm. Its function is as follows. Facilitates the functional incorporation of the urease nickel metallocenter. This process requires GTP hydrolysis, probably effectuated by UreG. The protein is Urease accessory protein UreG of Prochlorococcus marinus (strain NATL1A).